A 233-amino-acid polypeptide reads, in one-letter code: Orotidine 5'-phosphate decarboxylase (233 aa).

Substrate-binding positions include Asp13, Lys35, Asp62–Thr71, Thr122, Arg182, Gln191, Gly211, and Arg212. Lys64 functions as the Proton donor in the catalytic mechanism.

This sequence belongs to the OMP decarboxylase family. Type 1 subfamily. In terms of assembly, homodimer.

The enzyme catalyses orotidine 5'-phosphate + H(+) = UMP + CO2. It participates in pyrimidine metabolism; UMP biosynthesis via de novo pathway; UMP from orotate: step 2/2. Catalyzes the decarboxylation of orotidine 5'-monophosphate (OMP) to uridine 5'-monophosphate (UMP). This is Orotidine 5'-phosphate decarboxylase from Pseudomonas putida (strain W619).